The chain runs to 738 residues: Vesicle-fusing ATPase (738 aa).

ATP is bound by residues 507–512 and 547–554; these read NGIINY and PGCGKSSL.

The protein belongs to the AAA ATPase family. Interacts with syn7A, snpA and snpC. Mg(2+) is required as a cofactor.

It localises to the cytoplasmic vesicle membrane. It is found in the endosome membrane. It catalyses the reaction ATP + H2O = ADP + phosphate + H(+). In terms of biological role, required for vesicle-mediated transport. Involved in endocytosis and endosome-endosome fusion. May be required for transport from the endoplasmic reticulum to the Golgi stack, and for the fusion of transport vesicles within the Golgi cisternae. Required for cell polarity, locomotion and chemotaxis. This chain is Vesicle-fusing ATPase (nsfA), found in Dictyostelium discoideum (Social amoeba).